A 347-amino-acid chain; its full sequence is NADH-ubiquinone oxidoreductase chain 2 (347 aa).

The next 11 membrane-spanning stretches (helical) occupy residues methionine 1–alanine 21, histidine 25–threonine 45, alanine 55–leucine 75, threonine 96–proline 116, threonine 123–tyrosine 143, isoleucine 145–glycine 165, isoleucine 178–proline 198, isoleucine 200–asparagine 220, leucine 237–leucine 257, glycine 274–methionine 294, and phenylalanine 324–phenylalanine 344.

Belongs to the complex I subunit 2 family. In terms of assembly, core subunit of respiratory chain NADH dehydrogenase (Complex I) which is composed of 45 different subunits. Interacts with TMEM242.

The protein localises to the mitochondrion inner membrane. It catalyses the reaction a ubiquinone + NADH + 5 H(+)(in) = a ubiquinol + NAD(+) + 4 H(+)(out). Functionally, core subunit of the mitochondrial membrane respiratory chain NADH dehydrogenase (Complex I) which catalyzes electron transfer from NADH through the respiratory chain, using ubiquinone as an electron acceptor. Essential for the catalytic activity and assembly of complex I. The protein is NADH-ubiquinone oxidoreductase chain 2 of Hylobates lar (Lar gibbon).